The chain runs to 769 residues: Spastin (769 aa).

Positions M1–Q100 are disordered. Topologically, residues M1–P113 are cytoplasmic. Residues M1–G201 form a required for localization to punctate cytoplasmic foci region. Positions S8–S19 are enriched in low complexity. The segment covering S24–S33 has biased composition (gly residues). Over residues S54 to R63 the composition is skewed to polar residues. Over residues T64–S78 the composition is skewed to low complexity. An intramembrane region (helical) is located at residues I114–Y134. Residues L135–I769 are Cytoplasmic-facing. The sufficient for interaction with microtubules and microtubule severing stretch occupies residues S199–I769. The region spanning H224–L299 is the MIT domain. Residues K314–A462 are disordered. Positions T334–S344 are enriched in low complexity. Composition is skewed to polar residues over residues N395–V413 and Q434–I450. Residues N451 to A462 are compositionally biased toward low complexity. Residues N452 to L466 are required for interaction with microtubules. G534 to T541 is an ATP binding site.

This sequence belongs to the AAA ATPase family. Spastin subfamily. In terms of assembly, homohexamer. The homohexamer is stabilized by ATP-binding. The homohexamer may adopt a ring conformation through which microtubules pass prior to being severed. Interacts with microtubules. Interacts with atl; may be involved in microtubule dynamics.

It is found in the membrane. It localises to the cytoplasm. Its subcellular location is the cytoskeleton. The protein localises to the microtubule organizing center. The protein resides in the centrosome. It is found in the chromosome. It localises to the lipid droplet. It carries out the reaction n ATP + n H2O + a microtubule = n ADP + n phosphate + (n+1) alpha/beta tubulin heterodimers.. ATP-dependent microtubule severing protein. Stimulates microtubule minus-end depolymerization and poleward microtubule flux in the mitotic spindle. Regulates microtubule stability in the neuromuscular junction synapse. Involved in lipid metabolism by regulating the size and distribution of lipid droplets. Involved in axon regeneration by regulating microtubule severing. In Drosophila virilis (Fruit fly), this protein is Spastin.